The sequence spans 452 residues: Proline--tRNA ligase (452 aa).

It belongs to the class-II aminoacyl-tRNA synthetase family. ProS type 2 subfamily. Homodimer.

It localises to the cytoplasm. It catalyses the reaction tRNA(Pro) + L-proline + ATP = L-prolyl-tRNA(Pro) + AMP + diphosphate. In terms of biological role, catalyzes the attachment of proline to tRNA(Pro) in a two-step reaction: proline is first activated by ATP to form Pro-AMP and then transferred to the acceptor end of tRNA(Pro). This chain is Proline--tRNA ligase, found in Jannaschia sp. (strain CCS1).